A 300-amino-acid polypeptide reads, in one-letter code: Ornithine carbamoyltransferase (300 aa).

Carbamoyl phosphate is bound by residues 49–52, Gln-76, Arg-100, and 127–130; these read STRT and HPCQ. Residues Asn-158, Asp-218, and 222–223 each bind L-ornithine; that span reads SM. Carbamoyl phosphate contacts are provided by residues 258-259 and Arg-286; that span reads CL.

It belongs to the aspartate/ornithine carbamoyltransferase superfamily. OTCase family.

Its subcellular location is the cytoplasm. It carries out the reaction carbamoyl phosphate + L-ornithine = L-citrulline + phosphate + H(+). The protein operates within amino-acid biosynthesis; L-arginine biosynthesis; L-arginine from L-ornithine and carbamoyl phosphate: step 1/3. Reversibly catalyzes the transfer of the carbamoyl group from carbamoyl phosphate (CP) to the N(epsilon) atom of ornithine (ORN) to produce L-citrulline. The polypeptide is Ornithine carbamoyltransferase (Oleidesulfovibrio alaskensis (strain ATCC BAA-1058 / DSM 17464 / G20) (Desulfovibrio alaskensis)).